A 126-amino-acid chain; its full sequence is Cornifin alpha (126 aa).

Position 2 is an N-acetylserine (S2). 13 tandem repeats follow at residues 3 to 14 (SQQQKQPCTLPP), 18 to 29 (QHQVKQPCQPPP), 31 to 38 (EPCVPKTK), 39 to 46 (EPCQPKVP), 47 to 54 (EPCQPKVP), 55 to 62 (EPCQPKVP), 63 to 70 (EPCQPKVP), 71 to 78 (QPCQPKVP), 79 to 86 (EPCQPKVP), 87 to 94 (EPCQPKVP), 95 to 102 (EPCQPKVP), 103 to 110 (EPCQSKVP), and 111 to 118 (QPCQPKVP). A 2 X 12 AA approximate repeats region spans residues 3–29 (SQQQKQPCTLPPQLQQHQVKQPCQPPP). Positions 20–43 (QVKQPCQPPPQEPCVPKTKEPCQP) are disordered. Residues 31-122 (EPCVPKTKEP…CQPKVPEPCQ (92 aa)) are 11 X 8 AA approximate tandem repeats. A disordered region spans residues 104–126 (PCQSKVPQPCQPKVPEPCQTKQK).

Belongs to the cornifin (SPRR) family. Suprabasal layers of squamous-differentiated tissues such as epidermis, esophagus, tongue and trachea.

It localises to the cytoplasm. Cross-linked envelope protein of keratinocytes. It is a keratinocyte protein that first appears in the cell cytosol, but ultimately becomes cross-linked to membrane proteins by transglutaminase. All that results in the formation of an insoluble envelope beneath the plasma membrane. The sequence is that of Cornifin alpha from Oryctolagus cuniculus (Rabbit).